Consider the following 509-residue polypeptide: Maturase K (509 aa).

The protein belongs to the intron maturase 2 family. MatK subfamily.

It localises to the plastid. In terms of biological role, usually encoded in the trnK tRNA gene intron. Probably assists in splicing its own and other chloroplast group II introns. This chain is Maturase K, found in Cuscuta reflexa (Southern Asian dodder).